The sequence spans 197 residues: Lipid A acyltransferase PagP (197 aa).

An N-terminal signal peptide occupies residues 1–24; sequence MMFFKRTILACTVALLFPALPSYA. Residues histidine 69, aspartate 112, and serine 113 contribute to the active site.

The protein belongs to the lipid A palmitoyltransferase family. In terms of assembly, homodimer.

It localises to the cell outer membrane. The catalysed reaction is a lipid A + a 1,2-diacyl-sn-glycero-3-phosphocholine = a hepta-acyl lipid A + a 2-acyl-sn-glycero-3-phosphocholine. It carries out the reaction a lipid IVA + a 1,2-diacyl-sn-glycero-3-phosphocholine = a lipid IVB + a 2-acyl-sn-glycero-3-phosphocholine. It catalyses the reaction a lipid IIA + a 1,2-diacyl-sn-glycero-3-phosphocholine = a lipid IIB + a 2-acyl-sn-glycero-3-phosphocholine. Functionally, transfers a fatty acid residue from the sn-1 position of a phospholipid to the N-linked hydroxyfatty acid chain on the proximal unit of lipid A or its precursors. The chain is Lipid A acyltransferase PagP from Serratia proteamaculans (strain 568).